The sequence spans 56 residues: Large ribosomal subunit protein bL33 (56 aa).

This sequence belongs to the bacterial ribosomal protein bL33 family.

In Rickettsia prowazekii (strain Madrid E), this protein is Large ribosomal subunit protein bL33 (rpmG).